Here is a 72-residue protein sequence, read N- to C-terminus: Osmotically-inducible lipoprotein B (72 aa).

Residues 1–23 form the signal peptide; sequence MFVTSKKMTAAVLAITLAMSLSA. Cys24 carries the N-palmitoyl cysteine lipid modification. Cys24 carries the S-diacylglycerol cysteine lipid modification.

It localises to the cell membrane. In terms of biological role, provides resistance to osmotic stress. May be important for stationary-phase survival. This is Osmotically-inducible lipoprotein B (osmB) from Escherichia coli O157:H7.